The chain runs to 492 residues: 2,3-bisphosphoglycerate-independent phosphoglycerate mutase (492 aa).

Asp11 and Ser61 together coordinate Mn(2+). Ser61 (phosphoserine intermediate) is an active-site residue. Substrate contacts are provided by residues His118, 147–148 (RD), Arg178, Arg184, 248–251 (RNDR), and Lys320. Asp386, His390, Asp427, His428, and His445 together coordinate Mn(2+).

The protein belongs to the BPG-independent phosphoglycerate mutase family. As to quaternary structure, monomer. Requires Mn(2+) as cofactor.

The enzyme catalyses (2R)-2-phosphoglycerate = (2R)-3-phosphoglycerate. Its pathway is carbohydrate degradation; glycolysis; pyruvate from D-glyceraldehyde 3-phosphate: step 3/5. Its function is as follows. Catalyzes the interconversion of 2-phosphoglycerate and 3-phosphoglycerate. The polypeptide is 2,3-bisphosphoglycerate-independent phosphoglycerate mutase (Campylobacter jejuni subsp. doylei (strain ATCC BAA-1458 / RM4099 / 269.97)).